A 471-amino-acid polypeptide reads, in one-letter code: Plant intracellular Ras-group-related LRR protein 2 (471 aa).

The stretch at 106 to 133 forms a coiled coil; it reads VVRLDEVHDSYEKKLKDTEEELSRVYST. LRR repeat units lie at residues 159–182, 183–205, 206–229, 231–251, 253–275, 276–298, 300–321, 324–346, 347–369, and 371–392; these read GGTV…FWKV, VGLV…ISKL, KKLE…GMLL, LRIL…IAHC, SLVE…GYGL, QNLE…ISEM, NLKY…IGRL, LEVL…ITDL, TNLR…FYRL, and KLEK…VATQ. The short motif at 393-405 is the GVYW; degenerate element; it reads GAEVVREFMRKRW.

This sequence belongs to the SHOC2 family. Widely expressed but preferentially in roots.

Its function is as follows. Leucine-rich repeat protein that likely mediates protein interactions, possibly in the context of signal transduction. The sequence is that of Plant intracellular Ras-group-related LRR protein 2 (PIRL2) from Arabidopsis thaliana (Mouse-ear cress).